The primary structure comprises 159 residues: NADH-quinone oxidoreductase subunit B (159 aa).

Residues C37, C38, C102, and C132 each coordinate [4Fe-4S] cluster.

Belongs to the complex I 20 kDa subunit family. In terms of assembly, NDH-1 is composed of 14 different subunits. Subunits NuoB, C, D, E, F, and G constitute the peripheral sector of the complex. The cofactor is [4Fe-4S] cluster.

The protein localises to the cell inner membrane. The enzyme catalyses a quinone + NADH + 5 H(+)(in) = a quinol + NAD(+) + 4 H(+)(out). Functionally, NDH-1 shuttles electrons from NADH, via FMN and iron-sulfur (Fe-S) centers, to quinones in the respiratory chain. Couples the redox reaction to proton translocation (for every two electrons transferred, four hydrogen ions are translocated across the cytoplasmic membrane), and thus conserves the redox energy in a proton gradient. The chain is NADH-quinone oxidoreductase subunit B from Ruthia magnifica subsp. Calyptogena magnifica.